The sequence spans 147 residues: Protein phosphatase 1 regulatory subunit 14B (147 aa).

Residues 1–15 show a composition bias toward low complexity; that stretch reads MADSGPAGGAALAAP. Positions 1-55 are disordered; that stretch reads MADSGPAGGAALAAPAPGPGSGSTGPRVYFQSPPGAAGEGPGGADDDGPVRRQGK. Residue alanine 2 is modified to N-acetylalanine. Phosphoserine is present on serine 21. A Phosphotyrosine modification is found at tyrosine 29. Serine 32 is modified (phosphoserine). Threonine 57 carries the phosphothreonine modification. Positions 61 to 103 form a coiled coil; it reads DRKELRKRLNLEEWILEQLTRLYDCQEEEIPELEIDVDELLDM.

Belongs to the PP1 inhibitor family. Post-translationally, phosphorylated primarily on Thr-57 by PKC (in vitro). An unknown Ser is also phosphorylated by PKC (in vitro). In terms of tissue distribution, ubiquitous. Highly expressed in testis. Detected at low levels in the other tissues tested. Highly expressed in cardiac muscle, bladder and aorta (at protein level).

It localises to the cytoplasm. Functionally, inhibitor of PPP1CA. Has over 50-fold higher inhibitory activity when phosphorylated. This chain is Protein phosphatase 1 regulatory subunit 14B (Ppp1r14b), found in Mus musculus (Mouse).